Consider the following 94-residue polypeptide: Pyrimidine/purine nucleoside phosphorylase (94 aa).

It belongs to the nucleoside phosphorylase PpnP family.

It carries out the reaction a purine D-ribonucleoside + phosphate = a purine nucleobase + alpha-D-ribose 1-phosphate. The catalysed reaction is adenosine + phosphate = alpha-D-ribose 1-phosphate + adenine. It catalyses the reaction cytidine + phosphate = cytosine + alpha-D-ribose 1-phosphate. The enzyme catalyses guanosine + phosphate = alpha-D-ribose 1-phosphate + guanine. It carries out the reaction inosine + phosphate = alpha-D-ribose 1-phosphate + hypoxanthine. The catalysed reaction is thymidine + phosphate = 2-deoxy-alpha-D-ribose 1-phosphate + thymine. It catalyses the reaction uridine + phosphate = alpha-D-ribose 1-phosphate + uracil. The enzyme catalyses xanthosine + phosphate = alpha-D-ribose 1-phosphate + xanthine. Its function is as follows. Catalyzes the phosphorolysis of diverse nucleosides, yielding D-ribose 1-phosphate and the respective free bases. Can use uridine, adenosine, guanosine, cytidine, thymidine, inosine and xanthosine as substrates. Also catalyzes the reverse reactions. This chain is Pyrimidine/purine nucleoside phosphorylase, found in Citrobacter koseri (strain ATCC BAA-895 / CDC 4225-83 / SGSC4696).